The following is a 348-amino-acid chain: Protein RecA (348 aa).

68 to 75 (GPESSGKT) contributes to the ATP binding site.

It belongs to the RecA family.

It is found in the cytoplasm. In terms of biological role, can catalyze the hydrolysis of ATP in the presence of single-stranded DNA, the ATP-dependent uptake of single-stranded DNA by duplex DNA, and the ATP-dependent hybridization of homologous single-stranded DNAs. It interacts with LexA causing its activation and leading to its autocatalytic cleavage. The protein is Protein RecA of Rhodococcus opacus (strain B4).